The sequence spans 256 residues: MLKVIQLDKTYGSNKHSLKAVNFTAKPGEVTAIIGPSGAGKTTILRSINQLIRDDSGQILLDDTDIRQANKAELRKVRHHIGMIFQNYNLISPLTALENVLHGRLGAKSTVAGMLGLYSSAEKQEALQLLDEVGLKEYAYQRCDQLSGGQQQRVGIARALMQHPKMILCDEPIASLDPKSTTIVMDILRRLAKEKQLIILINLHQVDIAMAYTDHIVGINSGAIVFEGATNEVDDAVLQHIYRQPDQSTAVAANEN.

One can recognise an ABC transporter domain in the interval 2–246 (LKVIQLDKTY…VLQHIYRQPD (245 aa)). Residue 35-42 (GPSGAGKT) participates in ATP binding.

The protein belongs to the ABC transporter superfamily. Phosphonates importer (TC 3.A.1.9.1) family. In terms of assembly, the complex is composed of two ATP-binding proteins (PhnC), two transmembrane proteins (PhnE) and a solute-binding protein (PhnD).

It localises to the cell membrane. The catalysed reaction is phosphonate(out) + ATP + H2O = phosphonate(in) + ADP + phosphate + H(+). In terms of biological role, part of the ABC transporter complex PhnCDE involved in phosphonates import. Responsible for energy coupling to the transport system. This is Phosphonates import ATP-binding protein PhnC from Lactiplantibacillus plantarum (strain ATCC BAA-793 / NCIMB 8826 / WCFS1) (Lactobacillus plantarum).